We begin with the raw amino-acid sequence, 464 residues long: Anthocyanidin 3-O-galactosyltransferase 3GT1 (464 aa).

2 residues coordinate an anthocyanidin: serine 19 and histidine 21. Histidine 21 functions as the Proton acceptor in the catalytic mechanism. An N-linked (GlcNAc...) asparagine glycan is attached at asparagine 38. Aspartate 121 functions as the Charge relay in the catalytic mechanism. Residue histidine 152 coordinates an anthocyanidin. 7 residues coordinate UDP-alpha-D-glucose: alanine 342, glutamine 344, histidine 359, tryptophan 362, asparagine 363, serine 364, and glutamate 367. Glycine 382 is a binding site for an anthocyanidin. Position 383 (aspartate 383) interacts with UDP-alpha-D-glucose.

This sequence belongs to the UDP-glycosyltransferase family. In terms of assembly, monomer. As to expression, mostly expressed in leaves and flowers and, to a lower extent, in roots. In flowers, mainly observed in petals, toruses and scapes, and at lower levels in pistils and stamens.

The enzyme catalyses cyanidin + UDP-alpha-D-galactose = cyanidin 3-O-beta-D-galactoside + UDP + H(+). It catalyses the reaction cyanidin + UDP-alpha-D-glucose = cyanidin 3-O-beta-D-glucoside + UDP + H(+). It carries out the reaction delphinidin + UDP-alpha-D-glucose = delphinidin 3-O-beta-D-glucoside + UDP. The catalysed reaction is malvidin + UDP-alpha-D-glucose = malvidin 3-O-beta-D-glucoside + UDP. The enzyme catalyses delphinidin + UDP-alpha-D-galactose = delphinidin 3-O-beta-D-galactoside + UDP + H(+). It catalyses the reaction pelargonidin + UDP-alpha-D-galactose = pelargonidin 3-O-beta-D-galactoside betaine + UDP. It carries out the reaction peonidin + UDP-alpha-D-galactose = peonidin 3-O-beta-D-galactoside + UDP. The catalysed reaction is malvidin + UDP-alpha-D-galactose = malvidin 3-O-beta-D-galactoside + UDP + H(+). The enzyme catalyses petunidin + UDP-alpha-D-galactose = petunidin 3-O-beta-D-galactoside + UDP. It catalyses the reaction an anthocyanidin + UDP-alpha-D-glucose + H(+) = an anthocyanidin 3-O-beta-D-glucoside + UDP. It carries out the reaction an anthocyanidin + UDP-alpha-D-galactose = an anthocyanidin 3-O-beta-D-galactoside + UDP. It participates in pigment biosynthesis; anthocyanin biosynthesis. Functionally, flavonoid 3-O-glycosyltransferase involved in the biosynthesis of anthocyanins conferring flower red/pink colors, mainly anthocyanidin 3-O-glycosides. Catalyzes the addition of UDP-sugar to the 3-OH of anthocyanidin, with a preference for UDP-galactose (UDP-Gal) as sugar donor and cyanidin as substrate; able to use delphinidin, pelargonidin, peonidin, malvidin and petunidin as substrates in the presence of UDP-Gal. Can also use UDP-glucose (UDP-Glu) as sugar donor with delphinidin, cyanidin and malvidin as substrates, but not active on pelargonidin, peonidin and petunidin. The protein is Anthocyanidin 3-O-galactosyltransferase 3GT1 of Rhododendron delavayi (Rhododendron).